We begin with the raw amino-acid sequence, 231 residues long: NADH-ubiquinone oxidoreductase chain 4 (231 aa).

6 helical membrane passes run 1-21, 34-54, 62-84, 89-111, 128-148, and 169-189; these read PIAG…YGII, MFLP…LTCL, LIAY…QTPW, AMAL…NTTY, ILPM…AIPP, and TIIM…HMFL.

This sequence belongs to the complex I subunit 4 family.

The protein resides in the mitochondrion membrane. It carries out the reaction a ubiquinone + NADH + 5 H(+)(in) = a ubiquinol + NAD(+) + 4 H(+)(out). Its function is as follows. Core subunit of the mitochondrial membrane respiratory chain NADH dehydrogenase (Complex I) that is believed to belong to the minimal assembly required for catalysis. Complex I functions in the transfer of electrons from NADH to the respiratory chain. The immediate electron acceptor for the enzyme is believed to be ubiquinone. The chain is NADH-ubiquinone oxidoreductase chain 4 (MT-ND4) from Bothrops erythromelas (Caatinga lance head).